We begin with the raw amino-acid sequence, 565 residues long: Proline--tRNA ligase (565 aa).

This sequence belongs to the class-II aminoacyl-tRNA synthetase family. ProS type 1 subfamily. In terms of assembly, homodimer.

The protein resides in the cytoplasm. The enzyme catalyses tRNA(Pro) + L-proline + ATP = L-prolyl-tRNA(Pro) + AMP + diphosphate. Catalyzes the attachment of proline to tRNA(Pro) in a two-step reaction: proline is first activated by ATP to form Pro-AMP and then transferred to the acceptor end of tRNA(Pro). As ProRS can inadvertently accommodate and process non-cognate amino acids such as alanine and cysteine, to avoid such errors it has two additional distinct editing activities against alanine. One activity is designated as 'pretransfer' editing and involves the tRNA(Pro)-independent hydrolysis of activated Ala-AMP. The other activity is designated 'posttransfer' editing and involves deacylation of mischarged Ala-tRNA(Pro). The misacylated Cys-tRNA(Pro) is not edited by ProRS. The sequence is that of Proline--tRNA ligase from Francisella tularensis subsp. mediasiatica (strain FSC147).